Consider the following 472-residue polypeptide: Bone morphogenetic protein 3 (472 aa).

The N-terminal stretch at 1-22 (MAGASRLLFLWLGCFCVSLAQG) is a signal peptide. The propeptide occupies 23 to 362 (ERPKPPFPEL…EQTLKKARRK (340 aa)). Residues 27 to 37 (PPFPELRKAVP) are compositionally biased toward basic and acidic residues. The tract at residues 27–53 (PPFPELRKAVPGDRTAGGGPDSELQPQ) is disordered. Residues N117, N141, N175, and N220 are each glycosylated (N-linked (GlcNAc...) asparagine). Residues 320–350 (PYKTLQAQAPEKSKNKKKQRKGPHRKSQTLQ) are disordered. Residues 333–346 (KNKKKQRKGPHRKS) are compositionally biased toward basic residues. 3 disulfides stabilise this stretch: C370-C437, C399-C469, and C403-C471. N-linked (GlcNAc...) asparagine glycosylation occurs at N463.

It belongs to the TGF-beta family. As to quaternary structure, homodimer; disulfide-linked. Interacts with type II receptor ACVR2B. As to expression, expressed in adult and fetal cartilage.

The protein localises to the secreted. Functionally, growth factor of the TGF-beta superfamily that plays an essential role in developmental process by inducing and patterning early skeletal formation and by negatively regulating bone density. Antagonizes the ability of certain osteogenic BMPs to induce osteoprogenitor differentiation and ossification. Initiates signaling cascades by associating with type II receptor ACVR2B to activate SMAD2-dependent and SMAD-independent signaling cascades including TAK1 and JNK pathways. This is Bone morphogenetic protein 3 (BMP3) from Homo sapiens (Human).